The primary structure comprises 576 residues: Proline--tRNA ligase (576 aa).

Belongs to the class-II aminoacyl-tRNA synthetase family. ProS type 1 subfamily. As to quaternary structure, homodimer.

It localises to the cytoplasm. It carries out the reaction tRNA(Pro) + L-proline + ATP = L-prolyl-tRNA(Pro) + AMP + diphosphate. Functionally, catalyzes the attachment of proline to tRNA(Pro) in a two-step reaction: proline is first activated by ATP to form Pro-AMP and then transferred to the acceptor end of tRNA(Pro). As ProRS can inadvertently accommodate and process non-cognate amino acids such as alanine and cysteine, to avoid such errors it has two additional distinct editing activities against alanine. One activity is designated as 'pretransfer' editing and involves the tRNA(Pro)-independent hydrolysis of activated Ala-AMP. The other activity is designated 'posttransfer' editing and involves deacylation of mischarged Ala-tRNA(Pro). The misacylated Cys-tRNA(Pro) is not edited by ProRS. In Leptospira borgpetersenii serovar Hardjo-bovis (strain L550), this protein is Proline--tRNA ligase.